The following is a 122-amino-acid chain: S-adenosylmethionine decarboxylase proenzyme (122 aa).

The active-site Schiff-base intermediate with substrate; via pyruvic acid is the Ser-69. Ser-69 carries the pyruvic acid (Ser); by autocatalysis modification. His-74 acts as the Proton acceptor; for processing activity in catalysis. The active-site Proton donor; for catalytic activity is the Cys-89.

This sequence belongs to the prokaryotic AdoMetDC family. Type 1 subfamily. In terms of assembly, heterotetramer of two alpha and two beta chains arranged as a dimer of alpha/beta heterodimers. Pyruvate is required as a cofactor. Is synthesized initially as an inactive proenzyme. Formation of the active enzyme involves a self-maturation process in which the active site pyruvoyl group is generated from an internal serine residue via an autocatalytic post-translational modification. Two non-identical subunits are generated from the proenzyme in this reaction, and the pyruvate is formed at the N-terminus of the alpha chain, which is derived from the carboxyl end of the proenzyme. The post-translation cleavage follows an unusual pathway, termed non-hydrolytic serinolysis, in which the side chain hydroxyl group of the serine supplies its oxygen atom to form the C-terminus of the beta chain, while the remainder of the serine residue undergoes an oxidative deamination to produce ammonia and the pyruvoyl group blocking the N-terminus of the alpha chain.

It carries out the reaction S-adenosyl-L-methionine + H(+) = S-adenosyl 3-(methylsulfanyl)propylamine + CO2. The protein operates within amine and polyamine biosynthesis; S-adenosylmethioninamine biosynthesis; S-adenosylmethioninamine from S-adenosyl-L-methionine: step 1/1. Catalyzes the decarboxylation of S-adenosylmethionine to S-adenosylmethioninamine (dcAdoMet), the propylamine donor required for the synthesis of the polyamines spermine and spermidine from the diamine putrescine. This is S-adenosylmethionine decarboxylase proenzyme from Saccharolobus islandicus (strain L.S.2.15 / Lassen #1) (Sulfolobus islandicus).